The primary structure comprises 318 residues: Cobalamin biosynthesis protein CobD (318 aa).

The next 5 membrane-spanning stretches (helical) occupy residues 51-71, 77-97, 153-173, 206-226, and 296-316; these read VGGVLLLLLAVGITAGAAWGA, LVHPLAGVVVSALLGWTCLAA, DGVIAPLLFFMIGGAPLALAY, LIPARLTGLLMTLAAPLAGLS, and MYGAECLLVLLAAVMTTILTI.

The protein belongs to the CobD/CbiB family.

The protein resides in the cell membrane. The protein operates within cofactor biosynthesis; adenosylcobalamin biosynthesis. Functionally, converts cobyric acid to cobinamide by the addition of aminopropanol on the F carboxylic group. In Geobacter metallireducens (strain ATCC 53774 / DSM 7210 / GS-15), this protein is Cobalamin biosynthesis protein CobD.